The chain runs to 122 residues: Large ribosomal subunit protein bL12 (122 aa).

A disordered region spans residues 94 to 122 (GNVKEGLSKEDAEEMKEKLEEAGATVELK). Basic and acidic residues predominate over residues 99-114 (GLSKEDAEEMKEKLEE).

The protein belongs to the bacterial ribosomal protein bL12 family. In terms of assembly, homodimer. Part of the ribosomal stalk of the 50S ribosomal subunit. Forms a multimeric L10(L12)X complex, where L10 forms an elongated spine to which 2 to 4 L12 dimers bind in a sequential fashion. Binds GTP-bound translation factors.

Functionally, forms part of the ribosomal stalk which helps the ribosome interact with GTP-bound translation factors. Is thus essential for accurate translation. This is Large ribosomal subunit protein bL12 from Halanaerobium praevalens.